Here is a 330-residue protein sequence, read N- to C-terminus: Thiosulfate transporter TsuA (330 aa).

Over 1–2 (MI) the chain is Periplasmic. Residues 3 to 18 (WTGLLVGFLFGIVLQR) form a helical membrane-spanning segment. Residues 19–36 (GRICFNSAFRDVLLFKDN) lie on the Cytoplasmic side of the membrane. Residues 37-59 (YLFKLAVFTLALEMILFVLLSQV) form a helical membrane-spanning segment. The Periplasmic segment spans residues 60–70 (GLMQMNPKPLN). A helical membrane pass occupies residues 71-87 (LVGNIIGGFVFGLGMVL). The Cytoplasmic segment spans residues 88–102 (AGGCASGVTYRVGEG). Residues 103 to 121 (LTTAWFAALFYGLGAYATK) traverse the membrane as a helical segment. Residues 122 to 162 (SGAFSWWLSWVGQFKSPLSVEESAYYVKGAGPTISSVLGLN) lie on the Periplasmic side of the membrane. The helical transmembrane segment at 163–180 (PWIPALVIAALFILWAFG) threads the bilayer. Topologically, residues 181–189 (TKTTSRETK) are cytoplasmic. The chain crosses the membrane as a helical span at residues 190–211 (FNWKIASVCLALVAGLGFITST). Topologically, residues 212–239 (LSGRKYGLGITGGWINLFQGFLTNSPLN) are periplasmic. Residues 240–258 (WEGLEIVGIILGAGVAAAV) form a helical membrane-spanning segment. Over 259–269 (AGEFKLRMPKN) the chain is Cytoplasmic. The helical transmembrane segment at 270-289 (PVTYLQVGIGGLLMGIGAVT) threads the bilayer. At 290-306 (AGGCNIGHFLTGVPQLA) the chain is on the periplasmic side. Residues 307–326 (LSSWLASIFFILGNWTMAWI) form a helical membrane-spanning segment. The Cytoplasmic portion of the chain corresponds to 327–330 (LFRR).

This sequence belongs to the TsuA/YedE (TC 9.B.102) family.

It is found in the cell inner membrane. It catalyses the reaction thiosulfate(in) = thiosulfate(out). Mediates thiosulfate uptake. This is Thiosulfate transporter TsuA from Spirochaeta thermophila (strain ATCC 700085 / DSM 6578 / Z-1203).